Reading from the N-terminus, the 283-residue chain is Protease HtpX homolog (283 aa).

2 consecutive transmembrane segments (helical) span residues 7–27 (TAVLMAAITALFMAIGSVLGG) and 29–49 (QGMAIALVVALGMNFFSYWFS). Histidine 131 serves as a coordination point for Zn(2+). The active site involves glutamate 132. Histidine 135 contacts Zn(2+). The next 2 membrane-spanning stretches (helical) occupy residues 146 to 166 (ISATMAGAISMLANFAMFFGG) and 177 to 197 (IAGILVMLLAPLAASLIQMAI). Glutamate 202 serves as a coordination point for Zn(2+).

It belongs to the peptidase M48B family. Requires Zn(2+) as cofactor.

The protein localises to the cell inner membrane. The protein is Protease HtpX homolog of Methylibium petroleiphilum (strain ATCC BAA-1232 / LMG 22953 / PM1).